A 439-amino-acid polypeptide reads, in one-letter code: Proline--tRNA ligase (439 aa).

This sequence belongs to the class-II aminoacyl-tRNA synthetase family. ProS type 2 subfamily. As to quaternary structure, homodimer.

It is found in the cytoplasm. The enzyme catalyses tRNA(Pro) + L-proline + ATP = L-prolyl-tRNA(Pro) + AMP + diphosphate. In terms of biological role, catalyzes the attachment of proline to tRNA(Pro) in a two-step reaction: proline is first activated by ATP to form Pro-AMP and then transferred to the acceptor end of tRNA(Pro). The protein is Proline--tRNA ligase of Rhodopseudomonas palustris (strain HaA2).